A 260-amino-acid polypeptide reads, in one-letter code: 3'-5' ssDNA/RNA exonuclease TatD (260 aa).

A divalent metal cation is bound by residues glutamate 91, histidine 127, and histidine 152.

It belongs to the metallo-dependent hydrolases superfamily. TatD-type hydrolase family. TatD subfamily. In terms of assembly, monomer. It depends on Mg(2+) as a cofactor.

It is found in the cytoplasm. 3'-5' exonuclease that prefers single-stranded DNA and RNA. May play a role in the H(2)O(2)-induced DNA damage repair. The polypeptide is 3'-5' ssDNA/RNA exonuclease TatD (Enterobacter lignolyticus (strain SCF1)).